A 233-amino-acid chain; its full sequence is MAMSSYMVNSKYVDPKFPPCEEYSQNNYIPEQGSDYYSSSQDTDFQHPGIYPRSNYTEQPFGCTAVQEPTVPRGHVHDKSGQPSPFNAQTESGAPVLVAGPRTCGQQQNTKSQNGTQAKQPAVVYPWMKKVHVTTVNPDYTGSEPKRSRTAYTRQQVLELEKEFHFNRYLTRRRRIEIAHTLCLSERQIKIWFQNRRMKWTKDHKLPNTKGRSAPASSHLQSIHKDQTDITSL.

Positions Val124–Lys129 match the Antp-type hexapeptide motif. Positions Pro145 to His204 form a DNA-binding region, homeobox. Positions Asp203–Leu233 are disordered. A compositionally biased stretch (basic and acidic residues) spans Ile223–Leu233.

Belongs to the Antp homeobox family. Deformed subfamily.

The protein resides in the nucleus. Sequence-specific transcription factor which is part of a developmental regulatory system that provides cells with specific positional identities on the anterior-posterior axis. This is Homeobox protein Hox-D4a (hoxd4a) from Takifugu rubripes (Japanese pufferfish).